We begin with the raw amino-acid sequence, 142 residues long: Transcriptional regulator MraZ (142 aa).

2 SpoVT-AbrB domains span residues 5–51 (ASAL…PRPE) and 77–120 (AMDV…DSQT).

The protein belongs to the MraZ family. In terms of assembly, forms oligomers.

The protein resides in the cytoplasm. It is found in the nucleoid. The protein is Transcriptional regulator MraZ of Burkholderia ambifaria (strain MC40-6).